The chain runs to 304 residues: Uricase (304 aa).

An N-acetylalanine modification is found at Ala2. 2 positions are modified to N6-acetyllysine; alternate: Lys10 and Lys23. N6-succinyllysine; alternate is present on residues Lys10 and Lys23. Catalysis depends on Lys23, which acts as the Charge relay system. An N6-acetyllysine mark is found at Lys27 and Lys36. Residues Ser39 and Ser63 each carry the phosphoserine modification. Catalysis depends on Thr68, which acts as the Charge relay system. Thr68 and Asp69 together coordinate urate. N6-acetyllysine is present on residues Lys118, Lys122, and Lys164. Position 170 (Phe170) interacts with urate. Lys175 and Lys185 each carry N6-acetyllysine. Residue Arg187 participates in urate binding. Residues Lys221 and Lys228 each carry the N6-acetyllysine; alternate modification. 2 positions are modified to N6-succinyllysine; alternate: Lys221 and Lys228. Ser232 bears the Phosphoserine mark. Urate is bound by residues Val235, Gln236, and Asn262. The Charge relay system role is filled by His264. Lys278 is subject to N6-acetyllysine. Tyr289 carries the post-translational modification Phosphotyrosine. The Microbody targeting signal signature appears at 302–304; the sequence is SRL.

This sequence belongs to the uricase family.

Its subcellular location is the peroxisome. The catalysed reaction is urate + O2 + H2O = 5-hydroxyisourate + H2O2. Its pathway is purine metabolism; urate degradation; (S)-allantoin from urate: step 1/3. Catalyzes the oxidation of uric acid to 5-hydroxyisourate, which is further processed to form (S)-allantoin. This is Uricase (UOX) from Macaca fascicularis (Crab-eating macaque).